We begin with the raw amino-acid sequence, 379 residues long: Protein-glutamate methylesterase/protein-glutamine glutaminase (379 aa).

Residues 4–121 (KVLVVDDSSF…AKNSDEAGSL (118 aa)) enclose the Response regulatory domain. At Asp-55 the chain carries 4-aspartylphosphate. Residues 185 to 379 (SGKEYKLLAI…ASMVKEISRG (195 aa)) enclose the CheB-type methylesterase domain. Residues Ser-197, His-224, and Asp-321 contribute to the active site.

Belongs to the CheB family. Post-translationally, phosphorylated by CheA. Phosphorylation of the N-terminal regulatory domain activates the methylesterase activity.

It is found in the cytoplasm. The catalysed reaction is [protein]-L-glutamate 5-O-methyl ester + H2O = L-glutamyl-[protein] + methanol + H(+). It carries out the reaction L-glutaminyl-[protein] + H2O = L-glutamyl-[protein] + NH4(+). Its function is as follows. Involved in chemotaxis. Part of a chemotaxis signal transduction system that modulates chemotaxis in response to various stimuli. Catalyzes the demethylation of specific methylglutamate residues introduced into the chemoreceptors (methyl-accepting chemotaxis proteins or MCP) by CheR. Also mediates the irreversible deamidation of specific glutamine residues to glutamic acid. The polypeptide is Protein-glutamate methylesterase/protein-glutamine glutaminase (Colwellia psychrerythraea (strain 34H / ATCC BAA-681) (Vibrio psychroerythus)).